The following is a 996-amino-acid chain: Depolymerase, capsule K64-specific (996 aa).

The protein localises to the virion. Functions as a receptor binding protein (RBP) and probably mediates the attachment to the host capsular exopolysaccharides. Displays a depolymerase activity that specifically degrades the K64-type polysaccharides of Klebsiella pneumoniae capsule. The protein is Depolymerase, capsule K64-specific of Klebsiella (Bacteriophage K64-1).